The chain runs to 445 residues: GTPase Der (445 aa).

2 consecutive EngA-type G domains span residues 3–167 and 180–353; these read PVIA…YAGQ and IKIA…AAAM. GTP contacts are provided by residues 9–16, 56–60, 119–122, 186–193, 233–237, and 298–301; these read GRPNVGKS, DTGGF, NKAE, DTAGL, and NKWD. In terms of domain architecture, KH-like spans 354-438; that stretch reads AKLPTPKLTR…PLRIEFRSSN (85 aa).

This sequence belongs to the TRAFAC class TrmE-Era-EngA-EngB-Septin-like GTPase superfamily. EngA (Der) GTPase family. In terms of assembly, associates with the 50S ribosomal subunit.

Its function is as follows. GTPase that plays an essential role in the late steps of ribosome biogenesis. This is GTPase Der from Burkholderia cenocepacia (strain HI2424).